Reading from the N-terminus, the 1020-residue chain is Valine--tRNA ligase (1020 aa).

Residues 45 to 55 (PNVTGALHVGH) carry the 'HIGH' region motif. Positions 661–665 (KMSKT) match the 'KMSKS' region motif. Lys664 is a binding site for ATP. Positions 955-1020 (AEKDRLEKAK…EALARLAELG (66 aa)) form a coiled coil.

This sequence belongs to the class-I aminoacyl-tRNA synthetase family. ValS type 1 subfamily. Monomer.

The protein localises to the cytoplasm. The enzyme catalyses tRNA(Val) + L-valine + ATP = L-valyl-tRNA(Val) + AMP + diphosphate. Catalyzes the attachment of valine to tRNA(Val). As ValRS can inadvertently accommodate and process structurally similar amino acids such as threonine, to avoid such errors, it has a 'posttransfer' editing activity that hydrolyzes mischarged Thr-tRNA(Val) in a tRNA-dependent manner. The polypeptide is Valine--tRNA ligase (Ruegeria pomeroyi (strain ATCC 700808 / DSM 15171 / DSS-3) (Silicibacter pomeroyi)).